Here is a 1013-residue protein sequence, read N- to C-terminus: Trehalose monomycolate exporter MmpL3 (1013 aa).

Over methionine 1 to tyrosine 14 the chain is Cytoplasmic. A helical transmembrane segment spans residues isoleucine 15 to glycine 35. Residues asparagine 36–leucine 196 lie on the Periplasmic side of the membrane. Glutamine 40–tyrosine 44 contributes to the a 1,2-diacylglycero-3-phosphoethanolamine binding site. A run of 2 helical transmembrane segments spans residues valine 197 to isoleucine 217 and glycine 218 to valine 238. Residues histidine 239–phenylalanine 240 lie on the Periplasmic side of the membrane. A helical membrane pass occupies residues phenylalanine 241 to isoleucine 261. Residues valine 262–valine 290 are Cytoplasmic-facing. The helical transmembrane segment at valine 291–phenylalanine 311 threads the bilayer. Residues leucine 312 to tyrosine 317 are Periplasmic-facing. The chain crosses the membrane as a helical span at residues alanine 318–leucine 338. Residues alanine 339 to proline 401 are Cytoplasmic-facing. Residues isoleucine 402 to leucine 422 traverse the membrane as a helical segment. Over serine 423–methionine 567 the chain is Periplasmic. The disordered stretch occupies residues serine 485–valine 513. Residues aspartate 493–serine 512 show a composition bias toward basic and acidic residues. The helical transmembrane segment at alanine 568–leucine 588 threads the bilayer. Residues proline 589–lysine 591 are Cytoplasmic-facing. Residues alanine 592 to valine 612 traverse the membrane as a helical segment. Residues aspartate 613–proline 630 are Periplasmic-facing. Residues methionine 631–valine 651 form a helical membrane-spanning segment. Aspartate 645 is an SQ109 binding site. Over serine 652 to leucine 678 the chain is Cytoplasmic. The chain crosses the membrane as a helical span at residues isoleucine 679–valine 699. Residues methionine 700–tyrosine 703 lie on the Periplasmic side of the membrane. Residues leucine 704–valine 724 traverse the membrane as a helical segment. Over proline 725 to leucine 1013 the chain is Cytoplasmic. The disordered stretch occupies residues threonine 754–leucine 1013. The segment covering proline 757–glutamine 772 has biased composition (basic and acidic residues). 2 stretches are compositionally biased toward pro residues: residues histidine 792–proline 803 and proline 820–alanine 829. The span at arginine 842 to alanine 867 shows a compositional bias: low complexity. Positions proline 875–proline 885 are enriched in pro residues. Positions arginine 973–arginine 996 are enriched in basic and acidic residues.

The protein belongs to the resistance-nodulation-cell division (RND) (TC 2.A.6) family. MmpL subfamily. As to quaternary structure, monomer. Interacts with TtfA (via N-terminus); active trehalose monomycolate (TMM) biosynthesis is not required for the complex formation. Interacts with MSMEG_5308.

It is found in the cell inner membrane. The protein localises to the cell septum. The protein resides in the cell tip. Its activity is regulated as follows. Inhibited by the antimycobacterial compound BM212, a pyrrole derivative. Inhibited by the antitubercular drug SQ109. Inhibited by the adamantyl urea derivative AU1235, the indole carboxamide ICA38 and rimonabant, the antagonist for the cannabinoid receptor CB1. The dissociation constant (Kd) values for SQ109, AU1235, ICA38 and rimonabant are 1.65 uM, 0.29, 0.16 and 29.5, respectively. Inhibitory effects are due to binding of the inhibitors at the proton-transportation channel most likely dissipating the transmembrane electrochemical proton gradient needed for substrate translocation. Transports trehalose monomycolate (TMM) to the cell wall. Flips TMM across the inner membrane. Membrane potential is not required for this function. Transports probably phosphatidylethanolamine (PE) as well. Binds specifically both TMM and PE, but not trehalose dimycolate (TDM). Also binds diacylglycerol (DAG) and other phospholipids, including phosphatidylglycerol (PG), phosphatidylinositol (PI), and cardiolipin (CDL). Contributes to membrane potential, cell wall composition, antibiotic susceptibility and fitness. The chain is Trehalose monomycolate exporter MmpL3 from Mycolicibacterium smegmatis (strain ATCC 700084 / mc(2)155) (Mycobacterium smegmatis).